The primary structure comprises 121 residues: Large ribosomal subunit protein bL12 (121 aa).

The protein belongs to the bacterial ribosomal protein bL12 family. Homodimer. Part of the ribosomal stalk of the 50S ribosomal subunit. Forms a multimeric L10(L12)X complex, where L10 forms an elongated spine to which 2 to 4 L12 dimers bind in a sequential fashion. Binds GTP-bound translation factors.

Its function is as follows. Forms part of the ribosomal stalk which helps the ribosome interact with GTP-bound translation factors. Is thus essential for accurate translation. The protein is Large ribosomal subunit protein bL12 of Vibrio atlanticus (strain LGP32) (Vibrio splendidus (strain Mel32)).